We begin with the raw amino-acid sequence, 392 residues long: Mycofactocin maturase MftC (392 aa).

Residues L18–R228 form the Radical SAM core domain. 11 residues coordinate [4Fe-4S] cluster: C32, C36, C39, C253, C260, C271, C312, C315, C321, C325, and C343. The segment covering K354–R367 has biased composition (basic and acidic residues). The segment at K354–K377 is disordered.

It belongs to the radical SAM superfamily. MftC family. The cofactor is [4Fe-4S] cluster.

It carries out the reaction [mycofactocin precursor peptide]-C-terminal glycyl-L-valyl-L-tyrosine + S-adenosyl-L-methionine = [mycofactocin precursor peptide]-C-terminal glycyl-N-{[2-(4-hydroxyphenyl)ethenyl]-3-methylbutanamide} + 5'-deoxyadenosine + L-methionine + CO2. The enzyme catalyses [mycofactocin precursor peptide]-C-terminal glycyl-N-{[2-(4-hydroxyphenyl)ethenyl]-3-methylbutanamide} + AH2 + S-adenosyl-L-methionine = [mycofactocin precursor peptide]-C-terminal glycyl-N-{5-[(4-hydroxyphenyl)methyl]-4,4-dimethyl-2-oxopyrrolidin-3-yl}acetamide + 5'-deoxyadenosine + L-methionine + A + H(+). Its function is as follows. Radical S-adenosylmethionine (SAM) enzyme responsible for the first step of the biosynthesis of the enzyme cofactor mycofactocin (MFT). Catalyzes two reactions at the C-terminus of the mycofactocin precursor (the MftA peptide). The first one is the oxidative decarboxylation of the C-terminal L-tyrosine of MftA, forming an unsaturated tyramine moiety. The second reaction is the cross-linking of the tyramine with the penultimate L-valine residue, forming a five-membered lactam ring. Its activity requires the presence of the MftB chaperone. Is required for the in vivo ethanol assimilation in M.smegmatis. This chain is Mycofactocin maturase MftC, found in Mycolicibacterium smegmatis (strain ATCC 700084 / mc(2)155) (Mycobacterium smegmatis).